Consider the following 211-residue polypeptide: Proteasome subunit beta (211 aa).

Residues 1-8 (MNQTLETG) constitute a propeptide, removed in mature form; by autocatalysis. Catalysis depends on T9, which acts as the Nucleophile.

It belongs to the peptidase T1B family. The 20S proteasome core is composed of 14 alpha and 14 beta subunits that assemble into four stacked heptameric rings, resulting in a barrel-shaped structure. The two inner rings, each composed of seven catalytic beta subunits, are sandwiched by two outer rings, each composed of seven alpha subunits. The catalytic chamber with the active sites is on the inside of the barrel. Has a gated structure, the ends of the cylinder being occluded by the N-termini of the alpha-subunits. Is capped at one or both ends by the proteasome regulatory ATPase, PAN.

It is found in the cytoplasm. The catalysed reaction is Cleavage of peptide bonds with very broad specificity.. The formation of the proteasomal ATPase PAN-20S proteasome complex, via the docking of the C-termini of PAN into the intersubunit pockets in the alpha-rings, triggers opening of the gate for substrate entry. Interconversion between the open-gate and close-gate conformations leads to a dynamic regulation of the 20S proteasome proteolysis activity. Component of the proteasome core, a large protease complex with broad specificity involved in protein degradation. The T.acidophilum proteasome is able to cleave oligopeptides after Tyr, Leu, Phe, and to a lesser extent after Glu and Arg. Thus, displays chymotrypsin-like activity and low level of caspase-like and trypsin-like activities. The chain is Proteasome subunit beta from Thermoplasma acidophilum (strain ATCC 25905 / DSM 1728 / JCM 9062 / NBRC 15155 / AMRC-C165).